Here is a 101-residue protein sequence, read N- to C-terminus: NADH-quinone oxidoreductase subunit K (101 aa).

3 consecutive transmembrane segments (helical) span residues 4–24, 30–50, and 61–81; these read LSHY…GIFL, IILL…FVAF, and IFVF…LAIL.

The protein belongs to the complex I subunit 4L family. As to quaternary structure, NDH-1 is composed of 14 different subunits. Subunits NuoA, H, J, K, L, M, N constitute the membrane sector of the complex.

Its subcellular location is the cell inner membrane. It carries out the reaction a quinone + NADH + 5 H(+)(in) = a quinol + NAD(+) + 4 H(+)(out). Functionally, NDH-1 shuttles electrons from NADH, via FMN and iron-sulfur (Fe-S) centers, to quinones in the respiratory chain. The immediate electron acceptor for the enzyme in this species is believed to be ubiquinone. Couples the redox reaction to proton translocation (for every two electrons transferred, four hydrogen ions are translocated across the cytoplasmic membrane), and thus conserves the redox energy in a proton gradient. In Nitrosomonas eutropha (strain DSM 101675 / C91 / Nm57), this protein is NADH-quinone oxidoreductase subunit K.